A 215-amino-acid polypeptide reads, in one-letter code: Methylthioribulose-1-phosphate dehydratase (215 aa).

His-103 and His-105 together coordinate Zn(2+).

This sequence belongs to the aldolase class II family. MtnB subfamily. Zn(2+) is required as a cofactor.

The catalysed reaction is 5-(methylsulfanyl)-D-ribulose 1-phosphate = 5-methylsulfanyl-2,3-dioxopentyl phosphate + H2O. Its pathway is amino-acid biosynthesis; L-methionine biosynthesis via salvage pathway; L-methionine from S-methyl-5-thio-alpha-D-ribose 1-phosphate: step 2/6. Catalyzes the dehydration of methylthioribulose-1-phosphate (MTRu-1-P) into 2,3-diketo-5-methylthiopentyl-1-phosphate (DK-MTP-1-P). This Persephonella marina (strain DSM 14350 / EX-H1) protein is Methylthioribulose-1-phosphate dehydratase.